The following is a 99-amino-acid chain: U1-theraphotoxin-Tal1a (99 aa).

The signal sequence occupies residues 1-22; that stretch reads MNTIQVIIFAVVLVLTVTVGQA. Positions 23-57 are excised as a propeptide; sequence DEDSAETSLLRKLKEAEASLFGQHLEESQHSREKR. 3 disulfide bridges follow: Cys-58–Cys-73, Cys-65–Cys-78, and Cys-72–Cys-93. Serine amide is present on Ser-98.

This sequence belongs to the neurotoxin 14 (magi-1) family. 08 (Ltx-4) subfamily. Expressed by the venom gland.

Its subcellular location is the secreted. Insecticidal toxin that shows strong lethal effects on American cockroaches (P.americana) and common mealbeetle (T.molitor). Possibly acts by blocking ion channel currents. Also shows significant analgesic effects in mice models of pain including abdominal writhing induced by acetic acid and formalin-induced paw licking tests. In addition, exerts marked inhibition of proliferation of some human tumor cell lines including C8166, Molt-4, A-549, BIU-87, T24, and Calu-6. The sequence is that of U1-theraphotoxin-Tal1a from Tliltocatl albopilosus (Curlyhair tarantula).